Here is a 355-residue protein sequence, read N- to C-terminus: NADH-quinone oxidoreductase subunit H (355 aa).

The next 8 helical transmembrane spans lie at 25–45 (VVRILVVSVVILLCVAYLILW), 91–111 (WLYLIAPVMTVVPAFAVWAVI), 126–146 (LLYAMAISSIGVYAVILAGWA), 170–190 (MGFALVLVLMTAGSLNLSEIV), 205–225 (FLSWNWLPLLPAFVVYFISGI), 253–273 (MAFALFFLAEYINMIVISALA), 290–310 (FIPGIFWLVLKVFALLSVFIW), and 330–350 (VFLPVTVVWVIVVGFWMMSPL).

This sequence belongs to the complex I subunit 1 family. In terms of assembly, NDH-1 is composed of 14 different subunits. Subunits NuoA, H, J, K, L, M, N constitute the membrane sector of the complex.

It localises to the cell inner membrane. It carries out the reaction a quinone + NADH + 5 H(+)(in) = a quinol + NAD(+) + 4 H(+)(out). Functionally, NDH-1 shuttles electrons from NADH, via FMN and iron-sulfur (Fe-S) centers, to quinones in the respiratory chain. The immediate electron acceptor for the enzyme in this species is believed to be ubiquinone. Couples the redox reaction to proton translocation (for every two electrons transferred, four hydrogen ions are translocated across the cytoplasmic membrane), and thus conserves the redox energy in a proton gradient. This subunit may bind ubiquinone. The protein is NADH-quinone oxidoreductase subunit H of Burkholderia cenocepacia (strain HI2424).